The chain runs to 207 residues: 5-amino-6-(5-phosphoribosylamino)uracil reductase (207 aa).

Residue Ser6 coordinates substrate. Trp8 lines the NADP(+) pocket. Residue Arg22 participates in substrate binding. Asp38 is a binding site for NADP(+). Leu42 and Arg45 together coordinate substrate. An NADP(+)-binding site is contributed by Ser72. Glu137 lines the substrate pocket.

Belongs to the HTP reductase family.

The enzyme catalyses 5-amino-6-(5-phospho-D-ribitylamino)uracil + NADP(+) = 5-amino-6-(5-phospho-D-ribosylamino)uracil + NADPH + H(+). It participates in cofactor biosynthesis; riboflavin biosynthesis; 5-amino-6-(D-ribitylamino)uracil from GTP: step 3/4. This Buchnera aphidicola subsp. Acyrthosiphon pisum (strain APS) (Acyrthosiphon pisum symbiotic bacterium) protein is 5-amino-6-(5-phosphoribosylamino)uracil reductase (ribD2).